The following is a 498-amino-acid chain: Galactose-1-phosphate uridylyltransferase (498 aa).

Belongs to the galactose-1-phosphate uridylyltransferase type 2 family.

The protein localises to the cytoplasm. The catalysed reaction is alpha-D-galactose 1-phosphate + UDP-alpha-D-glucose = alpha-D-glucose 1-phosphate + UDP-alpha-D-galactose. The protein operates within carbohydrate metabolism; galactose metabolism. The polypeptide is Galactose-1-phosphate uridylyltransferase (Staphylococcus carnosus (strain TM300)).